We begin with the raw amino-acid sequence, 274 residues long: 4-diphosphocytidyl-2-C-methyl-D-erythritol kinase (274 aa).

K8 is a catalytic residue. 92 to 102 (PSGAGLGGGSS) contacts ATP. D134 is a catalytic residue.

This sequence belongs to the GHMP kinase family. IspE subfamily.

It carries out the reaction 4-CDP-2-C-methyl-D-erythritol + ATP = 4-CDP-2-C-methyl-D-erythritol 2-phosphate + ADP + H(+). The protein operates within isoprenoid biosynthesis; isopentenyl diphosphate biosynthesis via DXP pathway; isopentenyl diphosphate from 1-deoxy-D-xylulose 5-phosphate: step 3/6. Its function is as follows. Catalyzes the phosphorylation of the position 2 hydroxy group of 4-diphosphocytidyl-2C-methyl-D-erythritol. The sequence is that of 4-diphosphocytidyl-2-C-methyl-D-erythritol kinase from Porphyromonas gingivalis (strain ATCC 33277 / DSM 20709 / CIP 103683 / JCM 12257 / NCTC 11834 / 2561).